Reading from the N-terminus, the 429-residue chain is E3 ubiquitin-protein ligase ZNRF4 (429 aa).

The first 27 residues, 1–27 (MLRCRPEPLMPRATRVAVAVSLPLSHA), serve as a signal peptide directing secretion. Residues 28–250 (VIPTQLPSHP…PPCRDLDCHP (223 aa)) are Lumenal-facing. The disordered stretch occupies residues 30-64 (PTQLPSHPGHRPSGRPRRCPKAPCLPSPVGLSSTQ). Residues 37-49 (PGHRPSGRPRRCP) show a composition bias toward basic residues. Asparagine 152 carries an N-linked (GlcNAc...) asparagine glycan. The PA domain maps to 152-223 (NRSLGAIALI…VGEAASQDLR (72 aa)). The chain crosses the membrane as a helical span at residues 251–271 (VLTVSWALGRTLALVVSTLFV). The Cytoplasmic segment spans residues 272 to 429 (LNRLWLWAQA…SPAPPEAPGQ (158 aa)). Residues 309–352 (CAICLDEYEEGDQLKILPCSHTYHCKCIDPWFSQAPRRSCPVCK) form an RING-type; atypical zinc finger. Disordered regions lie at residues 358–381 (TEDS…GHRP) and 409–429 (TTSL…APGQ). Positions 409-420 (TTSLEAEDTTVS) are enriched in polar residues.

As to quaternary structure, interacts with CANX.

The protein localises to the endoplasmic reticulum membrane. The enzyme catalyses S-ubiquitinyl-[E2 ubiquitin-conjugating enzyme]-L-cysteine + [acceptor protein]-L-lysine = [E2 ubiquitin-conjugating enzyme]-L-cysteine + N(6)-ubiquitinyl-[acceptor protein]-L-lysine.. The protein operates within protein modification; protein ubiquitination. Functionally, E3 ubiquitin-protein ligase that acts as a negative regulator of NOD2 signaling by mediating ubiquitination and degradation of RIPK2. Also catalyzes ubiquitination and proteasomal degradation of CANX within the endoplasmic reticulum. Could have a role in spermatogenesis. The polypeptide is E3 ubiquitin-protein ligase ZNRF4 (ZNRF4) (Macaca fascicularis (Crab-eating macaque)).